Here is a 631-residue protein sequence, read N- to C-terminus: MGFSPSSSWFLHPQLHHVVSKMSYFDAFLFYIVHLVDKLGLWHRFPVLLGVAYLGLRRHLHQRYNLVHVGPINGQGYDTDEFCYRTADGKCNHPSDNTIGSQGSFIGRNMPPSTSQYGILDPHPSVVATKLLARKRFIDNGDQFNVIACSWIQFMIHDWVDHLEDTHQIELEAPEEVASGCPLKSFKFLRTKKVPTDDHHKSGAVNTRTPWWDGSVIYGNDETGMRRVRVFKDGKLKISGDGLLERDERGVPISGDIRNSWSGFSLLQALFVKEHNSVCDMLKERYPDFDDEKLYRTARLVTAAVIAKVHTIDWTIELLKTDTLTAGMRINWYGFFGKKVKDMVGARFGPLFSGLVGLKKPNDHGVPYSLTEEFVSVYRMHCLLPETLILRDMNSENVDKENPAIEREIPMTELIGKKAGEKASKLGFEQLLVSMGHQSCGALTLWNYPNWMRNLVAQDIDGEDRPHLIDMAALEIYRDRERGVPRYNEFRKNLLMSPISKWEELTDDEEAIKVLREVYEDDIEKLDLNVGLHAEKKIKGFAISETAFFIFLLVASRRLEADRFFTTNFNEKTYTKEGLEWVNTTETLKDVIDRHFPRLTDQWMRCSSAFSVWGSDPNPKNWVPLYLRSAP.

Positions 1 to 20 (MGFSPSSSWFLHPQLHHVVS) are cleaved as a signal peptide. His-157 is a binding site for heme b. The active-site Proton acceptor is Tyr-378. Position 381 (His-381) interacts with heme b. An N-linked (GlcNAc...) asparagine glycan is attached at Asn-583.

The protein belongs to the peroxidase family. Requires heme b as cofactor. In terms of tissue distribution, expressed in seedlings (cotyledons, young leaves, and hypocotyls), flowers, siliques and old leaves.

Alpha-dioxygenase that catalyzes the primary oxygenation of fatty acids into oxylipins. May be involved in the senescence process. The sequence is that of Alpha-dioxygenase 2 (DOX2) from Arabidopsis thaliana (Mouse-ear cress).